Reading from the N-terminus, the 339-residue chain is Methylthioribose-1-phosphate isomerase (339 aa).

Residues 50–52 (RGA), arginine 84, and glutamine 186 each bind substrate. Aspartate 227 functions as the Proton donor in the catalytic mechanism. 237–238 (NK) contributes to the substrate binding site.

This sequence belongs to the eIF-2B alpha/beta/delta subunits family. MtnA subfamily.

It carries out the reaction 5-(methylsulfanyl)-alpha-D-ribose 1-phosphate = 5-(methylsulfanyl)-D-ribulose 1-phosphate. It functions in the pathway amino-acid biosynthesis; L-methionine biosynthesis via salvage pathway; L-methionine from S-methyl-5-thio-alpha-D-ribose 1-phosphate: step 1/6. Functionally, catalyzes the interconversion of methylthioribose-1-phosphate (MTR-1-P) into methylthioribulose-1-phosphate (MTRu-1-P). This Sulfurihydrogenibium sp. (strain YO3AOP1) protein is Methylthioribose-1-phosphate isomerase.